Consider the following 570-residue polypeptide: La-related protein 7 (570 aa).

At M1 the chain carries N-acetylmethionine. Positions 1–16 (METENQKTMEESTKRK) are enriched in basic and acidic residues. Disordered stretches follow at residues 1–24 (METE…KRSR) and 180–364 (LNNP…ERHK). Residues 22-116 (RSRVKQVLAD…KPLGERPKDE (95 aa)) enclose the HTH La-type RNA-binding domain. The 79-residue stretch at 119 to 197 (RTVYVELLPK…PRKPGIFPKT (79 aa)) folds into the RRM domain. The span at 213–222 (KKKKKKKGRI) shows a compositional bias: basic residues. K231 is covalently cross-linked (Glycyl lysine isopeptide (Lys-Gly) (interchain with G-Cter in SUMO2)). Phosphothreonine is present on T251. Phosphoserine is present on residues S253 and S256. The residue at position 260 (T260) is a Phosphothreonine. Residues 286 to 295 (RAGKRERCSA) are compositionally biased toward basic and acidic residues. Phosphoserine is present on residues S294 and S334. A Phosphothreonine modification is found at T335. The segment covering 340 to 349 (ETDRKGDSLS) has biased composition (basic and acidic residues). S347 carries the phosphoserine modification. Positions 350 to 363 (KVKRKHKKKHKERH) are enriched in basic residues. K406 participates in a covalent cross-link: Glycyl lysine isopeptide (Lys-Gly) (interchain with G-Cter in SUMO2). Residues 438-551 (QFVTGVIVKI…TEKLITKAEK (114 aa)) enclose the xRRM domain.

This sequence belongs to the LARP7 family. As to quaternary structure, core component of the 7SK RNP complex, at least composed of 7SK RNA, LARP7, MEPCE, HEXIM1 (or HEXIM2) and P-TEFb (composed of CDK9 and CCNT1/cyclin-T1). Interacts with METTL16. Interacts with RBM7; upon genotoxic stress this interaction is enhanced, triggering the release of inactive P-TEFb complex from the core, yielding to P-TEFb complex activation. Associates with box C/D small nucleolar ribonucleoprotein (snoRNP) complexes.

Its subcellular location is the nucleus. The protein resides in the nucleoplasm. Functionally, RNA-binding protein that specifically binds distinct small nuclear RNA (snRNAs) and regulates their processing and function. Specifically binds the 7SK snRNA (7SK RNA) and acts as a core component of the 7SK ribonucleoprotein (RNP) complex, thereby acting as a negative regulator of transcription elongation by RNA polymerase II. The 7SK RNP complex sequesters the positive transcription elongation factor b (P-TEFb) in a large inactive 7SK RNP complex preventing RNA polymerase II phosphorylation and subsequent transcriptional elongation. The 7SK RNP complex also promotes snRNA gene transcription by RNA polymerase II via interaction with the little elongation complex (LEC). LARP7 specifically binds to the highly conserved 3'-terminal U-rich stretch of 7SK RNA; on stimulation, remains associated with 7SK RNA, whereas P-TEFb is released from the complex. LARP7 also acts as a regulator of mRNA splicing fidelity by promoting U6 snRNA processing. Specifically binds U6 snRNAs and associates with a subset of box C/D RNP complexes: promotes U6 snRNA 2'-O-methylation by facilitating U6 snRNA loading into box C/D RNP complexes. U6 snRNA 2'-O-methylation is required for mRNA splicing fidelity. Binds U6 snRNAs with a 5'-CAGGG-3' sequence motif. U6 snRNA processing is required for spermatogenesis. This Mus musculus (Mouse) protein is La-related protein 7.